Here is a 34-residue protein sequence, read N- to C-terminus: Cytochrome b6-f complex subunit 5 (34 aa).

The chain crosses the membrane as a helical span at residues 5 to 25; it reads LLSGIVLGLVPVTLAGLFVTA.

It belongs to the PetG family. In terms of assembly, the 4 large subunits of the cytochrome b6-f complex are cytochrome b6, subunit IV (17 kDa polypeptide, PetD), cytochrome f and the Rieske protein, while the 4 small subunits are PetG, PetL, PetM and PetN. The complex functions as a dimer.

The protein localises to the plastid. Its subcellular location is the chloroplast thylakoid membrane. Component of the cytochrome b6-f complex, which mediates electron transfer between photosystem II (PSII) and photosystem I (PSI), cyclic electron flow around PSI, and state transitions. PetG is required for either the stability or assembly of the cytochrome b6-f complex. The sequence is that of Cytochrome b6-f complex subunit 5 from Oltmannsiellopsis viridis (Marine flagellate).